An 80-amino-acid polypeptide reads, in one-letter code: Pre-core protein X (80 aa).

A propeptide spanning residues 2–32 is cleaved from the precursor; sequence ALTCRLRFPVPGFRGRMHRRRGMAGHGLTGG. Residues 18 to 45 are disordered; the sequence is MHRRRGMAGHGLTGGMRRAHHRRRRASH. Positions 34-45 are enriched in basic residues; that stretch reads RRAHHRRRRASH. The propeptide occupies 52 to 80; sequence ILPLLIPLIAAAIGAVPGIASVALQAQRH.

It belongs to the adenoviridae core protein X family. As to quaternary structure, interacts with the core-capsid bridging protein; this interaction bridges the virus core to the capsid. In terms of processing, cleaved by the viral protease during virion maturation to form the mature protein.

It is found in the host nucleus. Its subcellular location is the host nucleolus. The protein localises to the virion. Its function is as follows. Interacts with the viral DNA and aids in tightly condensing it within the capsid. Cleavage of pre-core protein X may serve to partially relax this structure within the mature virion prior to its entry into the nucleus. This Human adenovirus C serotype 2 (HAdV-2) protein is Pre-core protein X.